The primary structure comprises 175 residues: Coagulogen (175 aa).

8 cysteine pairs are disulfide-bonded: cysteine 8/cysteine 167, cysteine 10/cysteine 95, cysteine 60/cysteine 161, cysteine 65/cysteine 121, cysteine 75/cysteine 168, cysteine 88/cysteine 140, cysteine 127/cysteine 170, and cysteine 134/cysteine 172.

Belongs to the coagulin family. Coagulogen is cleaved after Arg-18 and Arg-46 by a clotting enzyme contained in the hemocyte and activated by a bacterial endotoxin (lipopolysaccharide). This cleavage releases the peptide C and leaves 2 chains of coagulin, A and B, linked by two disulfide bonds. Coagulin molecules interlink to form a gel. Hemolymph.

It is found in the secreted. In terms of biological role, coagulogen is a gel-forming protein of hemolymph; it hinders the spread of invaders by immobilizing them. This is Coagulogen from Tachypleus gigas (Southeast Asian horseshoe crab).